The primary structure comprises 223 residues: Phosphoribosylformylglycinamidine synthase subunit PurQ (223 aa).

Positions Ser3–Ala223 constitute a Glutamine amidotransferase type-1 domain. Cys87 functions as the Nucleophile in the catalytic mechanism. Active-site residues include His197 and Glu199.

As to quaternary structure, part of the FGAM synthase complex composed of 1 PurL, 1 PurQ and 2 PurS subunits.

It localises to the cytoplasm. The enzyme catalyses N(2)-formyl-N(1)-(5-phospho-beta-D-ribosyl)glycinamide + L-glutamine + ATP + H2O = 2-formamido-N(1)-(5-O-phospho-beta-D-ribosyl)acetamidine + L-glutamate + ADP + phosphate + H(+). It carries out the reaction L-glutamine + H2O = L-glutamate + NH4(+). Its pathway is purine metabolism; IMP biosynthesis via de novo pathway; 5-amino-1-(5-phospho-D-ribosyl)imidazole from N(2)-formyl-N(1)-(5-phospho-D-ribosyl)glycinamide: step 1/2. Part of the phosphoribosylformylglycinamidine synthase complex involved in the purines biosynthetic pathway. Catalyzes the ATP-dependent conversion of formylglycinamide ribonucleotide (FGAR) and glutamine to yield formylglycinamidine ribonucleotide (FGAM) and glutamate. The FGAM synthase complex is composed of three subunits. PurQ produces an ammonia molecule by converting glutamine to glutamate. PurL transfers the ammonia molecule to FGAR to form FGAM in an ATP-dependent manner. PurS interacts with PurQ and PurL and is thought to assist in the transfer of the ammonia molecule from PurQ to PurL. This is Phosphoribosylformylglycinamidine synthase subunit PurQ from Brucella abortus biovar 1 (strain 9-941).